Here is a 565-residue protein sequence, read N- to C-terminus: MKSPTPSRPQKMALIPACIFLCFAALSVQAEETSVTPQPPDILLGPLFNDVQNAKLFPDQKTFADAVPNSDPLMILADYRMQQNQSGFDLRHFVNVNFTLPKEGEKYVPPEGQSLREHIDGLWPVLTRATENTEKWDSLLPLPEPYVVPGGRFREVYYWDSYFTMLGLAESGHWDKVADMVANFAHEIDTYGHIPNGNRSYYLSRSQPPFFALMVELLAQHEGDAALKQYLPQMQKEYAYWMDGVENLQAGQQEKRVVKLQDGTLLNRYWDDRDTPRPESWVEDIATAKSNPNRPATEIYRDLRSAAASGWDFSSRWMDNPQQLNTLRTTSIVPVDLNSLMFKMEKILARASKAAGDNAMANQYETLANARQKGIEKYLWNDQQGWYADYDLKSHKVRNQLTAAALFPLYVNAAAKDRASKMATATKTHLLQPGGLNTTSVKSGQQWDAPNGWAPLQWVATEGLQNYGQKEVAMDISWHFLTNVQNTYDREKKLVEKYDVSATGTGGGGGEYPLQDGFGWTNGVTLKMLDLICPKEQPCDNVPATRPLSESTTQPLKQKEAEPTP.

Positions 1–30 (MKSPTPSRPQKMALIPACIFLCFAALSVQA) are cleaved as a signal peptide. Residues arginine 152, 159–160 (WD), asparagine 196, 205–207 (RSQ), 277–279 (RPE), and glycine 310 contribute to the substrate site. Active-site proton donor/acceptor residues include aspartate 312 and glutamate 496. Glutamate 511 is a substrate binding site. The segment at 539–565 (CDNVPATRPLSESTTQPLKQKEAEPTP) is disordered.

Belongs to the glycosyl hydrolase 37 family. Monomer.

It localises to the periplasm. The enzyme catalyses alpha,alpha-trehalose + H2O = alpha-D-glucose + beta-D-glucose. Functionally, provides the cells with the ability to utilize trehalose at high osmolarity by splitting it into glucose molecules that can subsequently be taken up by the phosphotransferase-mediated uptake system. In Escherichia coli (strain SMS-3-5 / SECEC), this protein is Periplasmic trehalase.